Reading from the N-terminus, the 95-residue chain is Bacterial microcompartment shell protein EutM (95 aa).

In terms of domain architecture, BMC spans 6–90 (ALGMIETKGL…PHFEVDAILP (85 aa)).

Belongs to the bacterial microcompartments protein family. In terms of assembly, homohexamer; has a positively charged pore 9 Angstroms in diameter. The hexamers pack into a two-dimensional array. May interact with EutQ.

The protein resides in the bacterial microcompartment. It participates in amine and polyamine degradation; ethanolamine degradation. Functionally, a component of the bacterial microcompartment (BMC) shell dedicated to ethanolamine degradation. Each homohexamer has a central pore with an opening of up to 9.0 Angstroms. Expression of the eut operon may allow this bacteria to use ethanolamine as a carbon, nitrogen and energy source. The pore probably allows metabolite passage into and out of the BMC. The protein is Bacterial microcompartment shell protein EutM of Clostridioides difficile (strain 630) (Peptoclostridium difficile).